Consider the following 229-residue polypeptide: Large ribosomal subunit protein uL1 (229 aa).

This sequence belongs to the universal ribosomal protein uL1 family. As to quaternary structure, part of the 50S ribosomal subunit.

Its function is as follows. Binds directly to 23S rRNA. The L1 stalk is quite mobile in the ribosome, and is involved in E site tRNA release. Functionally, protein L1 is also a translational repressor protein, it controls the translation of the L11 operon by binding to its mRNA. In Clostridium perfringens (strain ATCC 13124 / DSM 756 / JCM 1290 / NCIMB 6125 / NCTC 8237 / Type A), this protein is Large ribosomal subunit protein uL1.